The following is a 234-amino-acid chain: Phosphoribosylformylglycinamidine synthase subunit PurQ (234 aa).

The region spanning 3 to 231 (AAVVVFPGSN…ALYLERRKDH (229 aa)) is the Glutamine amidotransferase type-1 domain. Cys87 acts as the Nucleophile in catalysis. Residues His200 and Glu202 contribute to the active site.

Part of the FGAM synthase complex composed of 1 PurL, 1 PurQ and 2 PurS subunits.

It is found in the cytoplasm. The catalysed reaction is N(2)-formyl-N(1)-(5-phospho-beta-D-ribosyl)glycinamide + L-glutamine + ATP + H2O = 2-formamido-N(1)-(5-O-phospho-beta-D-ribosyl)acetamidine + L-glutamate + ADP + phosphate + H(+). It carries out the reaction L-glutamine + H2O = L-glutamate + NH4(+). The protein operates within purine metabolism; IMP biosynthesis via de novo pathway; 5-amino-1-(5-phospho-D-ribosyl)imidazole from N(2)-formyl-N(1)-(5-phospho-D-ribosyl)glycinamide: step 1/2. Part of the phosphoribosylformylglycinamidine synthase complex involved in the purines biosynthetic pathway. Catalyzes the ATP-dependent conversion of formylglycinamide ribonucleotide (FGAR) and glutamine to yield formylglycinamidine ribonucleotide (FGAM) and glutamate. The FGAM synthase complex is composed of three subunits. PurQ produces an ammonia molecule by converting glutamine to glutamate. PurL transfers the ammonia molecule to FGAR to form FGAM in an ATP-dependent manner. PurS interacts with PurQ and PurL and is thought to assist in the transfer of the ammonia molecule from PurQ to PurL. The sequence is that of Phosphoribosylformylglycinamidine synthase subunit PurQ from Pseudothermotoga lettingae (strain ATCC BAA-301 / DSM 14385 / NBRC 107922 / TMO) (Thermotoga lettingae).